Consider the following 833-residue polypeptide: Leucine--tRNA ligase (833 aa).

A 'HIGH' region motif is present at residues 41 to 52 (PYPSGAGLHVGH). The short motif at 610–614 (KMSKS) is the 'KMSKS' region element. Lys-613 contacts ATP.

It belongs to the class-I aminoacyl-tRNA synthetase family.

It localises to the cytoplasm. It catalyses the reaction tRNA(Leu) + L-leucine + ATP = L-leucyl-tRNA(Leu) + AMP + diphosphate. In Streptococcus pneumoniae (strain CGSP14), this protein is Leucine--tRNA ligase.